The sequence spans 314 residues: Ribose-phosphate pyrophosphokinase (314 aa).

ATP contacts are provided by residues 37–39 and 96–97; these read DGE and RQ. Positions 131 and 170 each coordinate Mg(2+). Residue lysine 194 is part of the active site. Residues arginine 196, aspartate 220, and 224–228 each bind D-ribose 5-phosphate; that span reads DTGGT.

Belongs to the ribose-phosphate pyrophosphokinase family. Class I subfamily. Homohexamer. Mg(2+) is required as a cofactor.

The protein resides in the cytoplasm. It catalyses the reaction D-ribose 5-phosphate + ATP = 5-phospho-alpha-D-ribose 1-diphosphate + AMP + H(+). The protein operates within metabolic intermediate biosynthesis; 5-phospho-alpha-D-ribose 1-diphosphate biosynthesis; 5-phospho-alpha-D-ribose 1-diphosphate from D-ribose 5-phosphate (route I): step 1/1. Involved in the biosynthesis of the central metabolite phospho-alpha-D-ribosyl-1-pyrophosphate (PRPP) via the transfer of pyrophosphoryl group from ATP to 1-hydroxyl of ribose-5-phosphate (Rib-5-P). This Vibrio vulnificus (strain CMCP6) protein is Ribose-phosphate pyrophosphokinase.